The following is a 426-amino-acid chain: Glutamate-1-semialdehyde 2,1-aminomutase (426 aa).

Lys-268 is modified (N6-(pyridoxal phosphate)lysine).

It belongs to the class-III pyridoxal-phosphate-dependent aminotransferase family. HemL subfamily. Requires pyridoxal 5'-phosphate as cofactor.

The protein localises to the cytoplasm. The enzyme catalyses (S)-4-amino-5-oxopentanoate = 5-aminolevulinate. The protein operates within porphyrin-containing compound metabolism; protoporphyrin-IX biosynthesis; 5-aminolevulinate from L-glutamyl-tRNA(Glu): step 2/2. In Saccharolobus islandicus (strain M.16.27) (Sulfolobus islandicus), this protein is Glutamate-1-semialdehyde 2,1-aminomutase.